We begin with the raw amino-acid sequence, 106 residues long: Nucleoid-associated protein MCCL_1934 (106 aa).

The disordered stretch occupies residues Met-1 to Glu-34. Positions Met-7–Lys-16 are enriched in low complexity. A compositionally biased stretch (basic and acidic residues) spans Lys-20–Glu-34.

It belongs to the YbaB/EbfC family. Homodimer.

It localises to the cytoplasm. Its subcellular location is the nucleoid. Its function is as follows. Binds to DNA and alters its conformation. May be involved in regulation of gene expression, nucleoid organization and DNA protection. This chain is Nucleoid-associated protein MCCL_1934, found in Macrococcus caseolyticus (strain JCSC5402) (Macrococcoides caseolyticum).